The chain runs to 539 residues: Glucose-6-phosphate isomerase (539 aa).

Residue Glu-349 is the Proton donor of the active site. Active-site residues include His-380 and Lys-508. The tract at residues Glu-519–Arg-539 is disordered.

Belongs to the GPI family.

The protein localises to the cytoplasm. The enzyme catalyses alpha-D-glucose 6-phosphate = beta-D-fructose 6-phosphate. The protein operates within carbohydrate biosynthesis; gluconeogenesis. Its pathway is carbohydrate degradation; glycolysis; D-glyceraldehyde 3-phosphate and glycerone phosphate from D-glucose: step 2/4. In terms of biological role, catalyzes the reversible isomerization of glucose-6-phosphate to fructose-6-phosphate. The polypeptide is Glucose-6-phosphate isomerase (Caulobacter vibrioides (strain ATCC 19089 / CIP 103742 / CB 15) (Caulobacter crescentus)).